A 2522-amino-acid chain; its full sequence is Unconventional myosin-IXAa (2522 aa).

Residues 15–113 form the Ras-associating domain; it reads SELTLRIYPG…YRFLLREKNL (99 aa). The Myosin motor domain maps to 147-1007; that stretch reads KDFDDLCNLP…ERQRLQDLLH (861 aa). The helical transmembrane segment at 176-196 threads the bilayer; sequence IYTYVGSILIVINPFKFLPIY. 240–247 contributes to the ATP binding site; it reads GESGSGKT. Residues 767–802 are disordered; sequence VNRRNPRTPLSDLQGSNAINQREGWNGRPGRQNRLS. Residues 777–786 show a composition bias toward polar residues; sequence SDLQGSNAIN. The tract at residues 888–910 is actin-binding; that stretch reads LNKLMETLGQSQPYFVKCIRSNS. IQ domains lie at 1012 to 1039, 1063 to 1092, 1102 to 1131, and 1125 to 1154; these read SRIV…AACQ, QEGA…ASVL, QRRA…ATIR, and QRDA…QRLK. Residues 1012 to 1149 are neck or regulatory domain; that stretch reads SRIVYLQRRF…LARQRFRELQ (138 aa). Positions 1150-2497 are tail; sequence KQRLKITHLP…LQGAKSSPQR (1348 aa). Disordered regions lie at residues 1218–1254, 1318–1409, 1424–1612, 1630–1754, 1799–1827, and 1962–1983; these read GMAP…RRMR, DKAP…STRR, NEAD…GNIF, NQEK…GRVR, RLSP…VKRR, and LDSS…KDTD. The segment covering 1229 to 1242 has biased composition (basic and acidic residues); it reads TIRERPRTLEDPNQ. 2 stretches are compositionally biased toward polar residues: residues 1330 to 1349 and 1366 to 1390; these read SPSS…STPD and SLPT…NSVT. Basic and acidic residues-rich tracts occupy residues 1399 to 1408 and 1426 to 1435; these read PSKDKKESTR and ADVKPLEVKD. Residues 1437 to 1454 show a composition bias toward polar residues; sequence AAQTSEPPSPAQPSTDSS. Residues 1456–1525 adopt a coiled-coil conformation; it reads VLEKLEKLNE…LRRIEQSRQE (70 aa). 4 stretches are compositionally biased toward basic and acidic residues: residues 1458–1484, 1492–1523, 1549–1566, and 1580–1589; these read EKLE…EMME, ILEE…EQSR, PARE…RPKD, and LESRGDEARS. 2 stretches are compositionally biased toward polar residues: residues 1594-1604 and 1631-1641; these read KPSNQNVNISM and QEKTPGAQNEV. Positions 1656–1665 are enriched in basic residues; that stretch reads PGHKKARMAR. Residues 1681-1690 show a composition bias toward acidic residues; that stretch reads GESEEEEYDE. Composition is skewed to basic and acidic residues over residues 1738 to 1753 and 1810 to 1822; these read LGKH…DGRV and LQRE…EPSP. The Phorbol-ester/DAG-type zinc-finger motif lies at 1990 to 2039; the sequence is GHIFKSTQYSIPTYCEYCSSLIWMMDKACVCKLCRYACHRKCCQKMTTKC. The Rho-GAP domain maps to 2054-2242; that stretch reads VELSRLTNDE…LIICEQMNKY (189 aa). 2 disordered regions span residues 2274-2325 and 2348-2522; these read PVHR…QEEK and LEPR…EFMV. Positions 2317–2344 form a coiled coil; the sequence is QVAMQQEEKVLTEQIESLQKEKEELTFE. Polar residues predominate over residues 2366-2383; it reads TADSSENLNVDSEGATSD. The span at 2413 to 2429 shows a compositional bias: low complexity; the sequence is SLDSIDSCSTVSSVSSS. Basic residues predominate over residues 2436 to 2448; that stretch reads RTHKLSLRSKSPS. The segment covering 2497–2506 has biased composition (basic and acidic residues); that stretch reads RHREQKKDPE.

The protein belongs to the TRAFAC class myosin-kinesin ATPase superfamily. Myosin family.

Its subcellular location is the membrane. It is found in the cytoplasm. The protein localises to the synapse. It localises to the cell projection. The protein resides in the growth cone. Functionally, myosins are actin-based motor molecules with ATPase activity. Unconventional myosins serve in intracellular movements. Regulates Rho by stimulating it's GTPase activity in neurons. Required for the regulation of neurite branching and motor neuron axon guidance. The polypeptide is Unconventional myosin-IXAa (myo9aa) (Danio rerio (Zebrafish)).